The sequence spans 237 residues: Probable F-box protein At1g53815 (237 aa).

Residues Ile41 to Tyr72 enclose the F-box domain.

The protein is Probable F-box protein At1g53815 of Arabidopsis thaliana (Mouse-ear cress).